A 169-amino-acid polypeptide reads, in one-letter code: MANEKNQQTLGSLKDSLQGIETFYVVDYQGLTAGQLTQLRKDIREKGGQLIVAKNTLLNLALQEGGRDFDDALKGPSALVLAQEDPAGVAKALSDAAGRNDRGIPTVKGGFVEGSKVDVAVVQRLASLGSKTTLQAELVGVLSAHLSNFVGILEAYREKLEGEGGSESA.

The protein belongs to the universal ribosomal protein uL10 family. In terms of assembly, part of the 50S ribosomal subunit.

This Deinococcus radiodurans (strain ATCC 13939 / DSM 20539 / JCM 16871 / CCUG 27074 / LMG 4051 / NBRC 15346 / NCIMB 9279 / VKM B-1422 / R1) protein is Large ribosomal subunit protein uL10 (rplJ).